A 388-amino-acid polypeptide reads, in one-letter code: S-adenosylmethionine synthase (388 aa).

ATP is bound at residue His-16. Residue Asp-18 coordinates Mg(2+). Glu-44 serves as a coordination point for K(+). Positions 57 and 100 each coordinate L-methionine. The tract at residues 100-110 (QSPEIAQGVDR) is flexible loop. Residues 165–167 (DAK), 231–232 (KF), Asp-240, 246–247 (RK), Ala-263, and Lys-267 contribute to the ATP site. Asp-240 is a binding site for L-methionine. Lys-271 is a binding site for L-methionine.

Belongs to the AdoMet synthase family. Homotetramer; dimer of dimers. It depends on Mg(2+) as a cofactor. The cofactor is K(+).

It localises to the cytoplasm. It carries out the reaction L-methionine + ATP + H2O = S-adenosyl-L-methionine + phosphate + diphosphate. It participates in amino-acid biosynthesis; S-adenosyl-L-methionine biosynthesis; S-adenosyl-L-methionine from L-methionine: step 1/1. Functionally, catalyzes the formation of S-adenosylmethionine (AdoMet) from methionine and ATP. The overall synthetic reaction is composed of two sequential steps, AdoMet formation and the subsequent tripolyphosphate hydrolysis which occurs prior to release of AdoMet from the enzyme. This is S-adenosylmethionine synthase from Psychrobacter arcticus (strain DSM 17307 / VKM B-2377 / 273-4).